Reading from the N-terminus, the 162-residue chain is Transcription antitermination protein RfaH (162 aa).

The protein belongs to the RfaH family. In terms of assembly, interacts with both the nontemplate DNA and the RNA polymerase (RNAP). Monomer in solution.

Its function is as follows. Enhances distal genes transcription elongation in a specialized subset of operons that encode extracytoplasmic components. RfaH is recruited into a multi-component RNA polymerase complex by the ops element, which is a short conserved DNA sequence located downstream of the main promoter of these operons. Once bound, RfaH suppresses pausing and inhibits Rho-dependent and intrinsic termination at a subset of sites. Termination signals are bypassed, which allows complete synthesis of long RNA chains. Enhances expression of several operons involved in synthesis of lipopolysaccharides, exopolysaccharides, hemolysin, and sex factor. Also negatively controls expression and surface presentation of AG43 and possibly another AG43-independent factor that mediates cell-cell interactions and biofilm formation. The chain is Transcription antitermination protein RfaH from Escherichia coli (strain K12).